A 333-amino-acid chain; its full sequence is Nucleoid-associated protein APL_0429 (333 aa).

This sequence belongs to the YejK family.

The protein resides in the cytoplasm. It localises to the nucleoid. This chain is Nucleoid-associated protein APL_0429, found in Actinobacillus pleuropneumoniae serotype 5b (strain L20).